A 166-amino-acid chain; its full sequence is Phosphopantetheine adenylyltransferase (166 aa).

Serine 11 provides a ligand contact to substrate. Residues 11–12 (SF) and histidine 19 each bind ATP. Substrate-binding residues include lysine 43, alanine 76, and arginine 90. Residues 91-93 (GLR), glutamate 101, and 126-132 (MQPISSS) each bind ATP.

The protein belongs to the bacterial CoaD family. In terms of assembly, homohexamer. Mg(2+) serves as cofactor.

It is found in the cytoplasm. The enzyme catalyses (R)-4'-phosphopantetheine + ATP + H(+) = 3'-dephospho-CoA + diphosphate. It functions in the pathway cofactor biosynthesis; coenzyme A biosynthesis; CoA from (R)-pantothenate: step 4/5. Functionally, reversibly transfers an adenylyl group from ATP to 4'-phosphopantetheine, yielding dephospho-CoA (dPCoA) and pyrophosphate. In Streptococcus uberis (strain ATCC BAA-854 / 0140J), this protein is Phosphopantetheine adenylyltransferase.